Consider the following 688-residue polypeptide: UvrABC system protein B (688 aa).

Residues 41–429 (ANFEAGLAKQ…AGEVTELVVR (389 aa)) enclose the Helicase ATP-binding domain. An ATP-binding site is contributed by 54-61 (GVTGSGKT). A Beta-hairpin motif is present at residues 107–130 (YYDYYQPEAYVPSSDTFIEKDSSI). Residues 446-612 (QVDDLMSEIH…SVERPISDIM (167 aa)) form the Helicase C-terminal domain. Residues 616–646 (REDAAEKKSGKGRSKSRQVAEETPDYRAMKP) form a disordered region. A compositionally biased stretch (basic and acidic residues) spans 633-645 (QVAEETPDYRAMK). In terms of domain architecture, UVR spans 650 to 685 (AGKLKSLEQKMYQHAKDLEFEAAAQIRDQIQKLKTA).

The protein belongs to the UvrB family. In terms of assembly, forms a heterotetramer with UvrA during the search for lesions. Interacts with UvrC in an incision complex.

Its subcellular location is the cytoplasm. The UvrABC repair system catalyzes the recognition and processing of DNA lesions. A damage recognition complex composed of 2 UvrA and 2 UvrB subunits scans DNA for abnormalities. Upon binding of the UvrA(2)B(2) complex to a putative damaged site, the DNA wraps around one UvrB monomer. DNA wrap is dependent on ATP binding by UvrB and probably causes local melting of the DNA helix, facilitating insertion of UvrB beta-hairpin between the DNA strands. Then UvrB probes one DNA strand for the presence of a lesion. If a lesion is found the UvrA subunits dissociate and the UvrB-DNA preincision complex is formed. This complex is subsequently bound by UvrC and the second UvrB is released. If no lesion is found, the DNA wraps around the other UvrB subunit that will check the other stand for damage. The sequence is that of UvrABC system protein B from Xanthomonas oryzae pv. oryzae (strain KACC10331 / KXO85).